The sequence spans 819 residues: Advillin (819 aa).

Positions 1–731 (MSLSSAFRTV…YEQLKNELGD (731 aa)) are core. The stretch at 24–105 (MELVLVPLSA…VQYHESDTFR (82 aa)) is one Gelsolin-like 1 repeat. Tyr-85 is subject to Phosphotyrosine. Residues 109–116 (KRGIIYKK) and 135–143 (RLLHVKGKR) each bind a 1,2-diacyl-sn-glycero-3-phospho-(1D-myo-inositol-4,5-bisphosphate). Gelsolin-like repeat units lie at residues 144–215 (NIRA…KEAA), 265–339 (TEVA…SAMF), 407–486 (LVPV…RHFM), 524–592 (NTKA…PEFW), and 631–704 (TEVT…PPTF). The tract at residues 628–819 (FLVTEVTDFT…LQLKKEAGLF (192 aa)) is required for interaction with F-actin. The tract at residues 731-819 (DATAIVRITT…LQLKKEAGLF (89 aa)) is headpiece. The region spanning 753 to 819 (ESGPKYYPVE…LQLKKEAGLF (67 aa)) is the HP domain. Tyr-758 carries the phosphotyrosine modification.

Belongs to the villin/gelsolin family. Associates (via C-terminus) with actin. Interacts with F-actin. Interacts with SCARF1; the interaction occurs in embryonic dorsal root ganglions at 18 dpc and induces neurite-like outgrowth. Interacts with PLCE1. Interacts with ACTR2 and ACTR3; associates with the ARP2/3 complex. Expressed in dorsal root ganglion (DRG) neurons and superior cervical ganglia (SCG). Expressed in podocytes.

The protein resides in the cytoplasm. It localises to the cytoskeleton. It is found in the cell projection. Its subcellular location is the neuron projection. The protein localises to the axon. The protein resides in the lamellipodium. It localises to the cell junction. It is found in the focal adhesion. Functionally, ca(2+)-regulated actin-binding protein which plays an important role in actin bundling. May have a unique function in the morphogenesis of neuronal cells which form ganglia. Required for SREC1-mediated regulation of neurite-like outgrowth. Plays a role in regenerative sensory axon outgrowth and remodeling processes after peripheral injury in neonates. Involved in the formation of long fine actin-containing filopodia-like structures in fibroblast. Plays a role in ciliogenesis. In podocytes, controls lamellipodia formation through the regulation of EGF-induced diacylglycerol generation by PLCE1 and ARP2/3 complex assembly. This chain is Advillin, found in Rattus norvegicus (Rat).